Here is a 318-residue protein sequence, read N- to C-terminus: Replication factor C small subunit (318 aa).

43–50 (GSVGTGKT) contributes to the ATP binding site.

Belongs to the activator 1 small subunits family. RfcS subfamily. Heteromultimer composed of small subunits (RfcS) and large subunits (RfcL).

Its function is as follows. Part of the RFC clamp loader complex which loads the PCNA sliding clamp onto DNA. This Thermoplasma volcanium (strain ATCC 51530 / DSM 4299 / JCM 9571 / NBRC 15438 / GSS1) protein is Replication factor C small subunit.